Here is a 358-residue protein sequence, read N- to C-terminus: Methylthioribose-1-phosphate isomerase (358 aa).

Substrate-binding positions include 54–56 (RGA), R96, and Q205. The active-site Proton donor is D246. A substrate-binding site is contributed by 256-257 (NK).

It belongs to the eIF-2B alpha/beta/delta subunits family. MtnA subfamily.

The catalysed reaction is 5-(methylsulfanyl)-alpha-D-ribose 1-phosphate = 5-(methylsulfanyl)-D-ribulose 1-phosphate. The protein operates within amino-acid biosynthesis; L-methionine biosynthesis via salvage pathway; L-methionine from S-methyl-5-thio-alpha-D-ribose 1-phosphate: step 1/6. Catalyzes the interconversion of methylthioribose-1-phosphate (MTR-1-P) into methylthioribulose-1-phosphate (MTRu-1-P). The sequence is that of Methylthioribose-1-phosphate isomerase from Pseudomonas paraeruginosa (strain DSM 24068 / PA7) (Pseudomonas aeruginosa (strain PA7)).